Here is an 892-residue protein sequence, read N- to C-terminus: Zinc finger protein 512B (892 aa).

Residues 1–82 (MTDPFCVGGR…KKGRPKAENQ (82 aa)) are disordered. Over residues 8–19 (GGRRLPGSSKSG) the composition is skewed to low complexity. A C2H2-type 1; atypical zinc finger spans residues 105–129 (VKCPNSGCWLEFPSIYGLKYHYQRC). Residues 140 to 163 (FPCPFCEAAFTSKTQLEKHRIWNH) form a C2H2-type 2 zinc finger. Disordered regions lie at residues 323–473 (MVLL…RKKV) and 562–582 (EHSA…EERE). A compositionally biased stretch (polar residues) spans 371-384 (SMGQSSAFQLSADT). A compositionally biased stretch (low complexity) spans 385-398 (SSGSLSPGSRPSGG). Phosphoserine is present on S409. Residues 418–428 (TKHRRKQKTPK) are compositionally biased toward basic residues. Positions 421–427 (RRKQKTP) match the NuRD interaction motif motif. The C2H2-type 3 zinc finger occupies 540–563 (LKCQHCRKQFKSKAGLNYHTMAEH). The segment at 594–618 (LRCPQEGCGAAFSSLMGYQYHQRRC) adopts a C2H2-type 4; atypical zinc-finger fold. The C2H2-type 5 zinc-finger motif lies at 630-653 (FPCTHCGKTYRSKAGHDYHVRSEH). The segment at 649–682 (VRSEHTAPPPEEPTDKSPEAEDPLGVERTPSGRV) is disordered. A Phosphoserine modification is found at S686. A C2H2-type 6; atypical zinc finger spans residues 750–774 (VNCPNDCCEAIYSSVSGLKAHLASC). The segment at 784–807 (YRCLLCPKEFSSESGVKYHILKTH) adopts a C2H2-type 7 zinc-finger fold. Residues 812 to 892 (FRTSADPPPK…KVGVSKAPEK (81 aa)) form a disordered region. Over residues 819–831 (PPKHRSQDSLVPK) the composition is skewed to basic and acidic residues. Positions 832 to 849 (KEKKKNLAGGKKRGRKPK) are enriched in basic residues. Residues 850-876 (ERTPEEPVAKLPPRRDDWPPGCRDKGA) show a composition bias toward basic and acidic residues.

Belongs to the krueppel C2H2-type zinc-finger protein family. In terms of assembly, interacts (via its NuRD interaction motif) with RBBP4 of the nucleosome remodeling and deacetylase (NuRD) complex; the interaction is direct and may play a role in repressing gene expression.

The protein localises to the nucleus. Functionally, involved in transcriptional regulation by repressing gene expression. Associates with the nucleosome remodeling and histone deacetylase (NuRD) complex, which promotes transcriptional repression by histone deacetylation and nucleosome remodeling. This is Zinc finger protein 512B (ZNF512B) from Homo sapiens (Human).